The chain runs to 130 residues: Small ribosomal subunit protein uS9 (130 aa).

This sequence belongs to the universal ribosomal protein uS9 family.

The sequence is that of Small ribosomal subunit protein uS9 from Nitratidesulfovibrio vulgaris (strain ATCC 29579 / DSM 644 / CCUG 34227 / NCIMB 8303 / VKM B-1760 / Hildenborough) (Desulfovibrio vulgaris).